We begin with the raw amino-acid sequence, 313 residues long: Acetylglutamate kinase (313 aa).

Substrate-binding positions include 84 to 85 (GG), arginine 106, and asparagine 210.

It belongs to the acetylglutamate kinase family. ArgB subfamily.

It localises to the cytoplasm. The catalysed reaction is N-acetyl-L-glutamate + ATP = N-acetyl-L-glutamyl 5-phosphate + ADP. It functions in the pathway amino-acid biosynthesis; L-arginine biosynthesis; N(2)-acetyl-L-ornithine from L-glutamate: step 2/4. Catalyzes the ATP-dependent phosphorylation of N-acetyl-L-glutamate. In Gluconacetobacter diazotrophicus (strain ATCC 49037 / DSM 5601 / CCUG 37298 / CIP 103539 / LMG 7603 / PAl5), this protein is Acetylglutamate kinase.